A 40-amino-acid chain; its full sequence is Ice-structuring protein GS-8 (40 aa).

Methionine 1 bears the Blocked amino end (Met) mark.

It belongs to the type-I AFP family.

Antifreeze proteins lower the blood freezing point. The polypeptide is Ice-structuring protein GS-8 (Myoxocephalus aenaeus (Grubby sculpin)).